The chain runs to 568 residues: Vitamin H transporter 1 (568 aa).

12 helical membrane-spanning segments follow: residues 85–105 (IIPC…TVSL), 123–143 (GYSA…YIIF), 158–178 (IWVS…AVLG), 187–207 (YVAL…GLAY), 222–242 (IGWY…VSAG), 257–277 (WMFL…PWWL), 345–365 (VWPF…IFNY), 384–404 (LLNA…MPLY), 411–431 (FSFF…ANYA), 439–459 (GGLL…MAWC), 470–490 (VGVA…SVVT), and 508–528 (NDVC…EFLL). The interval 547–568 (VEDEQEMTDIKPALPSSQQADA) is disordered.

This sequence belongs to the major facilitator superfamily. Allantoate permease family.

The protein resides in the membrane. Functionally, involved in uptake of biotin and desthiobiotin with the concomitant entry of protons. This Schizosaccharomyces pombe (strain 972 / ATCC 24843) (Fission yeast) protein is Vitamin H transporter 1 (vht1).